A 310-amino-acid chain; its full sequence is Cytochrome f (310 aa).

The N-terminal stretch at 1–23 (MRRLIPILLGSLVLSLSILVAPA) is a signal peptide. 4 residues coordinate heme: Tyr-28, Cys-48, Cys-51, and His-52. The helical transmembrane segment at 277-297 (IYGLLAFFVAVSLAQILLVLK) threads the bilayer.

This sequence belongs to the cytochrome f family. In terms of assembly, the 4 large subunits of the cytochrome b6-f complex are cytochrome b6, subunit IV (17 kDa polypeptide, PetD), cytochrome f and the Rieske protein, while the 4 small subunits are PetG, PetL, PetM and PetN. The complex functions as a dimer. Heme is required as a cofactor.

It is found in the cellular thylakoid membrane. Functionally, component of the cytochrome b6-f complex, which mediates electron transfer between photosystem II (PSII) and photosystem I (PSI), cyclic electron flow around PSI, and state transitions. In Prochlorococcus marinus (strain MIT 9303), this protein is Cytochrome f.